A 650-amino-acid polypeptide reads, in one-letter code: Macrolide export ATP-binding/permease protein MacB (650 aa).

The 239-residue stretch at Leu-5–Thr-243 folds into the ABC transporter domain. Gly-41–Ser-48 serves as a coordination point for ATP. Transmembrane regions (helical) follow at residues Leu-273–Gly-293, Leu-523–Ile-543, Ala-554–Phe-574, Val-580–Leu-600, and Pro-613–Leu-633.

Belongs to the ABC transporter superfamily. Macrolide exporter (TC 3.A.1.122) family. Homodimer. Part of the tripartite efflux system MacAB-TolC, which is composed of an inner membrane transporter, MacB, a periplasmic membrane fusion protein, MacA, and an outer membrane component, TolC. The complex forms a large protein conduit and can translocate molecules across both the inner and outer membranes. Interacts with MacA.

The protein resides in the cell inner membrane. Part of the tripartite efflux system MacAB-TolC. MacB is a non-canonical ABC transporter that contains transmembrane domains (TMD), which form a pore in the inner membrane, and an ATP-binding domain (NBD), which is responsible for energy generation. Confers resistance against macrolides. The protein is Macrolide export ATP-binding/permease protein MacB of Shigella dysenteriae serotype 1 (strain Sd197).